Here is a 656-residue protein sequence, read N- to C-terminus: DNA mismatch repair protein MutL (656 aa).

The disordered stretch occupies residues 385–427 (DNSDSLTEQNSTDYTVNQPETGSVSEKITDRTVESSNEFTDRT). Residues 387 to 410 (SDSLTEQNSTDYTVNQPETGSVSE) show a composition bias toward polar residues. The span at 411 to 427 (KITDRTVESSNEFTDRT) shows a compositional bias: basic and acidic residues.

Belongs to the DNA mismatch repair MutL/HexB family.

In terms of biological role, this protein is involved in the repair of mismatches in DNA. It is required for dam-dependent methyl-directed DNA mismatch repair. May act as a 'molecular matchmaker', a protein that promotes the formation of a stable complex between two or more DNA-binding proteins in an ATP-dependent manner without itself being part of a final effector complex. The polypeptide is DNA mismatch repair protein MutL (Lactococcus lactis subsp. cremoris (strain SK11)).